The primary structure comprises 1433 residues: DNA polymerase III PolC-type (1433 aa).

An Exonuclease domain is found at 419-575 (FVVFDVETTG…YDAEATGHLL (157 aa)).

It belongs to the DNA polymerase type-C family. PolC subfamily.

The protein resides in the cytoplasm. It catalyses the reaction DNA(n) + a 2'-deoxyribonucleoside 5'-triphosphate = DNA(n+1) + diphosphate. In terms of biological role, required for replicative DNA synthesis. This DNA polymerase also exhibits 3' to 5' exonuclease activity. The chain is DNA polymerase III PolC-type from Halalkalibacterium halodurans (strain ATCC BAA-125 / DSM 18197 / FERM 7344 / JCM 9153 / C-125) (Bacillus halodurans).